The primary structure comprises 342 residues: Platelet-activating factor receptor (342 aa).

At 1-16 the chain is on the extracellular side; sequence MELNSSSRVDSEFRYT. Asn-4 carries an N-linked (GlcNAc...) asparagine glycan. Residues 17-38 traverse the membrane as a helical segment; that stretch reads LFPIVYSIIFVLGIIANGYVLW. The Cytoplasmic portion of the chain corresponds to 39-54; sequence VFARLYPSKKLNEIKI. The chain crosses the membrane as a helical span at residues 55–74; sequence FMVNLTVADLLFLITLPLWI. At 75–91 the chain is on the extracellular side; that stretch reads VYYSNQGNWFLPKFLCN. Cys-90 and Cys-173 are joined by a disulfide. A helical membrane pass occupies residues 92–113; sequence LAGCLFFINTYCSVAFLGVITY. Residues 114–133 lie on the Cytoplasmic side of the membrane; it reads NRFQAVKYPIKTAQATTRKR. The helical transmembrane segment at 134–155 threads the bilayer; that stretch reads GIALSLVIWVAIVAAASYFLVM. At 156–184 the chain is on the extracellular side; it reads DSTNVVSNKAGSGNITRCFEHYEKGSKPV. An N-linked (GlcNAc...) asparagine glycan is attached at Asn-169. A helical transmembrane segment spans residues 185–205; it reads LIIHICIVLGFFIVFLLILFC. Over 206 to 233 the chain is Cytoplasmic; it reads NLVIIHTLLRQPVKQQRNAEVRRRALWM. Residues 234-254 traverse the membrane as a helical segment; that stretch reads VCTVLAVFVICFVPHHMVQLP. Residues 255 to 276 are Extracellular-facing; the sequence is WTLAELGMWPSSNHQAINDAHQ. The helical transmembrane segment at 277-296 threads the bilayer; sequence VTLCLLSTNCVLDPVIYCFL. Topologically, residues 297–342 are cytoplasmic; that stretch reads TKKFRKHLSEKLNIMRSSQKCSRVTTDTGTEMAIPINHTPVNPIKN.

This sequence belongs to the G-protein coupled receptor 1 family. As to quaternary structure, interacts with ARRB1.

The protein resides in the cell membrane. In terms of biological role, receptor for platelet activating factor, a chemotactic phospholipid mediator that possesses potent inflammatory, smooth-muscle contractile and hypotensive activity. Seems to mediate its action via a G protein that activates a phosphatidylinositol-calcium second messenger system. This chain is Platelet-activating factor receptor (PTAFR), found in Cavia porcellus (Guinea pig).